The sequence spans 70 residues: DNA-directed RNA polymerase subunit epsilon (70 aa).

It belongs to the RNA polymerase subunit epsilon family. As to quaternary structure, RNAP is composed of a core of 2 alpha, a beta and a beta' subunit. The core is associated with a delta subunit, and at least one of epsilon or omega. When a sigma factor is associated with the core the holoenzyme is formed, which can initiate transcription.

The enzyme catalyses RNA(n) + a ribonucleoside 5'-triphosphate = RNA(n+1) + diphosphate. Its function is as follows. A non-essential component of RNA polymerase (RNAP). This chain is DNA-directed RNA polymerase subunit epsilon, found in Bacillus cereus (strain ATCC 14579 / DSM 31 / CCUG 7414 / JCM 2152 / NBRC 15305 / NCIMB 9373 / NCTC 2599 / NRRL B-3711).